Reading from the N-terminus, the 411-residue chain is Serine hydroxymethyltransferase (411 aa).

(6S)-5,6,7,8-tetrahydrofolate contacts are provided by residues leucine 113 and 117 to 119 (GHL). The residue at position 222 (lysine 222) is an N6-(pyridoxal phosphate)lysine. (6S)-5,6,7,8-tetrahydrofolate-binding positions include glutamate 238 and 346–348 (SPF).

This sequence belongs to the SHMT family. In terms of assembly, homodimer. It depends on pyridoxal 5'-phosphate as a cofactor.

It is found in the cytoplasm. The catalysed reaction is (6R)-5,10-methylene-5,6,7,8-tetrahydrofolate + glycine + H2O = (6S)-5,6,7,8-tetrahydrofolate + L-serine. It functions in the pathway one-carbon metabolism; tetrahydrofolate interconversion. It participates in amino-acid biosynthesis; glycine biosynthesis; glycine from L-serine: step 1/1. Its function is as follows. Catalyzes the reversible interconversion of serine and glycine with tetrahydrofolate (THF) serving as the one-carbon carrier. This reaction serves as the major source of one-carbon groups required for the biosynthesis of purines, thymidylate, methionine, and other important biomolecules. Also exhibits THF-independent aldolase activity toward beta-hydroxyamino acids, producing glycine and aldehydes, via a retro-aldol mechanism. This Prochlorococcus marinus (strain NATL1A) protein is Serine hydroxymethyltransferase.